Here is a 353-residue protein sequence, read N- to C-terminus: Nicotinate-nucleotide--dimethylbenzimidazole phosphoribosyltransferase (353 aa).

E318 serves as the catalytic Proton acceptor.

Belongs to the CobT family.

It carries out the reaction 5,6-dimethylbenzimidazole + nicotinate beta-D-ribonucleotide = alpha-ribazole 5'-phosphate + nicotinate + H(+). The protein operates within nucleoside biosynthesis; alpha-ribazole biosynthesis; alpha-ribazole from 5,6-dimethylbenzimidazole: step 1/2. Functionally, catalyzes the synthesis of alpha-ribazole-5'-phosphate from nicotinate mononucleotide (NAMN) and 5,6-dimethylbenzimidazole (DMB). The polypeptide is Nicotinate-nucleotide--dimethylbenzimidazole phosphoribosyltransferase (Roseiflexus sp. (strain RS-1)).